The primary structure comprises 248 residues: ATP synthase subunit a (248 aa).

A run of 6 helical transmembrane segments spans residues 34–54, 91–111, 121–141, 147–167, 196–216, and 220–240; these read TNAT…LVFG, YFPY…LGLL, IAVT…LGFV, FLGL…LAVI, VFAA…AITA, and LEVL…CVYL.

This sequence belongs to the ATPase A chain family. As to quaternary structure, F-type ATPases have 2 components, CF(1) - the catalytic core - and CF(0) - the membrane proton channel. CF(1) has five subunits: alpha(3), beta(3), gamma(1), delta(1), epsilon(1). CF(0) has three main subunits: a(1), b(2) and c(9-12). The alpha and beta chains form an alternating ring which encloses part of the gamma chain. CF(1) is attached to CF(0) by a central stalk formed by the gamma and epsilon chains, while a peripheral stalk is formed by the delta and b chains.

Its subcellular location is the cell inner membrane. Key component of the proton channel; it plays a direct role in the translocation of protons across the membrane. In Paracoccus denitrificans (strain Pd 1222), this protein is ATP synthase subunit a.